Reading from the N-terminus, the 79-residue chain is Defensin-like protein 117 (79 aa).

The N-terminal stretch at 1 to 24 is a signal peptide; it reads MTTTKTMLVAFVLTLFFVISSVHC. 4 disulfides stabilise this stretch: cysteine 40-cysteine 75, cysteine 46-cysteine 68, cysteine 53-cysteine 73, and cysteine 57-cysteine 74.

This sequence belongs to the DEFL family.

It is found in the secreted. The chain is Defensin-like protein 117 from Arabidopsis thaliana (Mouse-ear cress).